We begin with the raw amino-acid sequence, 817 residues long: Neurabin-2 (817 aa).

2 actin-binding regions span residues Met-1–Ser-154 and Glu-164–Val-283. A disordered region spans residues Met-1–Ala-165. 2 positions are modified to phosphoserine: Ser-15 and Ser-17. Over residues Gly-44–Lys-58 the composition is skewed to basic residues. Phosphoserine occurs at positions 94, 100, and 116. The segment at Ser-100 to Ala-371 is interaction with D(2) dopamine receptor. A compositionally biased stretch (pro residues) spans Ser-131 to Pro-141. The segment at Arg-169–Pro-255 is interaction with ADRA2A, ADRA2B and ADRA2C. Ser-192 is subject to Phosphoserine. Thr-193 is modified (phosphothreonine). Ser-205 is subject to Phosphoserine. Position 207 is a phosphothreonine (Thr-207). A disordered region spans residues Glu-216–Arg-447. Pro residues predominate over residues Gln-252–Pro-261. Residues Lys-291–Glu-302 show a composition bias toward basic and acidic residues. Positions Ser-333–Ala-342 are enriched in low complexity. The segment covering Glu-344 to Ala-356 has biased composition (basic and acidic residues). Residues Leu-410–Tyr-425 are compositionally biased toward acidic residues. The segment at Asp-417 to Leu-494 is interaction with protein phosphatase 1. Ser-438 bears the Phosphoserine mark. A PP1-binding motif motif is present at residues Arg-447 to Phe-451. The interval Ser-480–Gly-525 is interaction with RGS2. Residues Pro-496–Arg-584 enclose the PDZ domain. The tract at residues Ile-595–Ser-816 is interaction with TGN38. Phosphoserine is present on Ser-658. A coiled-coil region spans residues Phe-671–Leu-788.

As to quaternary structure, interacts with DCLK2. Possibly exists as a homodimer, homotrimer or a homotetramer. Interacts with F-actin, PPP1CA, neurabin-1, TGN38 and D(2) dopamine receptor. Interacts with RGS1, RGS2, RGS4, RGS19 and ADRA1B, ADRA2A, ADRA2B, ADRA2C, CDKN2A, PPP1R2, RASGFR1 and TIAM1. Interacts (via C-terminus) with SPATA13 (via C-terminal tail). Interacts with ADRA2B. Post-translationally, stimulation of D1 (but not D2) dopamine receptors induces Ser-94 phosphorylation. Dephosphorylation of Ser-94 is mediated mainly by PP1 and to a lesser extent by PP2A. Phosphorylation of spinophilin disrupts its association with F-actin, but does not affect its binding to PP1.

It is found in the cytoplasm. Its subcellular location is the cytoskeleton. It localises to the nucleus. The protein localises to the cell projection. The protein resides in the dendritic spine. It is found in the postsynaptic density. Its subcellular location is the synapse. It localises to the cell junction. The protein localises to the adherens junction. The protein resides in the cell membrane. It is found in the lamellipodium. Its subcellular location is the filopodium. It localises to the ruffle membrane. Seems to act as a scaffold protein in multiple signaling pathways. Modulates excitatory synaptic transmission and dendritic spine morphology. Binds to actin filaments (F-actin) and shows cross-linking activity. Binds along the sides of the F-actin. May play an important role in linking the actin cytoskeleton to the plasma membrane at the synaptic junction. Believed to target protein phosphatase 1/PP1 to dendritic spines, which are rich in F-actin, and regulates its specificity toward ion channels and other substrates, such as AMPA-type and NMDA-type glutamate receptors. Plays a role in regulation of G-protein coupled receptor signaling, including dopamine D2 receptors and alpha-adrenergic receptors. May establish a signaling complex for dopaminergic neurotransmission through D2 receptors by linking receptors downstream signaling molecules and the actin cytoskeleton. Binds to ADRA1B and RGS2 and mediates regulation of ADRA1B signaling. May confer to Rac signaling specificity by binding to both, RacGEFs and Rac effector proteins. Probably regulates p70 S6 kinase activity by forming a complex with TIAM1. Required for hepatocyte growth factor (HGF)-induced cell migration. The polypeptide is Neurabin-2 (PPP1R9B) (Homo sapiens (Human)).